The following is a 326-amino-acid chain: Vitamin B12 import system permease protein BtuC (326 aa).

Helical transmembrane passes span 19–39 (LSVL…LWIL), 61–81 (LAVL…QALF), 88–108 (PGLL…VLLG), 112–132 (LPNW…TLIL), 146–166 (LLAG…AIYF), 184–204 (GGVD…LLWI), 240–260 (GWMV…GLVI), 274–294 (VLLP…DIVA), and 302–322 (ELPI…WLLL).

The protein belongs to the binding-protein-dependent transport system permease family. FecCD subfamily. In terms of assembly, the complex is composed of two ATP-binding proteins (BtuD), two transmembrane proteins (BtuC) and a solute-binding protein (BtuF).

It is found in the cell inner membrane. In terms of biological role, part of the ABC transporter complex BtuCDF involved in vitamin B12 import. Involved in the translocation of the substrate across the membrane. The sequence is that of Vitamin B12 import system permease protein BtuC from Escherichia coli O6:K15:H31 (strain 536 / UPEC).